Consider the following 593-residue polypeptide: Zinc metalloproteinase-disintegrin-like kaouthiagin-like (593 aa).

The first 20 residues, 1-20 (MIQALLVIICLAVFPHQGSS), serve as a signal peptide directing secretion. Positions 21–196 (IILESGNVND…KTSQFTNTPE (176 aa)) are excised as a propeptide. The Peptidase M12B domain maps to 205-400 (KYIEFYVIVD…DRPQCILNKP (196 aa)). Positions 208 and 292 each coordinate Ca(2+). Disulfide bonds link Cys316-Cys395, Cys356-Cys379, and Cys358-Cys363. N-linked (GlcNAc...) asparagine glycosylation occurs at Asn319. 3 residues coordinate Zn(2+): His341, His345, and His351. 8 residues coordinate Ca(2+): Cys395, Asn398, Ile410, Asn413, Phe415, Glu417, Glu420, and Asp423. The Disintegrin domain maps to 408 to 477 (PPICGNYFVE…ECPTDSLQRN (70 aa)). Disulfide bonds link Cys411-Cys440, Cys422-Cys435, Cys424-Cys430, Cys434-Cys462, Cys449-Cys469, Cys456-Cys488, Cys481-Cys493, Cys500-Cys550, Cys515-Cys558, Cys528-Cys538, Cys545-Cys581, and Cys575-Cys586. Positions 455–457 (DCD) match the D/ECD-tripeptide motif. Asp457, Leu458, Glu460, Asp472, and Ser473 together coordinate Ca(2+). A glycan (N-linked (GlcNAc...) asparagine) is linked at Asn490.

Belongs to the venom metalloproteinase (M12B) family. P-III subfamily. P-IIIa sub-subfamily. As to quaternary structure, monomer. Zn(2+) serves as cofactor. In terms of tissue distribution, expressed by the venom gland.

The protein resides in the secreted. Functionally, snake venom zinc metalloproteinase that cleaves the membrane-bound precursor of TNF-alpha (TNF) into its mature soluble form showing the same digestion pattern than ADAM17. The polypeptide is Zinc metalloproteinase-disintegrin-like kaouthiagin-like (Naja atra (Chinese cobra)).